The sequence spans 215 residues: Large ribosomal subunit protein uL3 (215 aa).

Residues 136 to 155 form a disordered region; it reads GVSISHRSHGSTGQRQDPGK. Position 151 is an N5-methylglutamine (Gln-151).

Belongs to the universal ribosomal protein uL3 family. Part of the 50S ribosomal subunit. Forms a cluster with proteins L14 and L19. In terms of processing, methylated by PrmB.

Functionally, one of the primary rRNA binding proteins, it binds directly near the 3'-end of the 23S rRNA, where it nucleates assembly of the 50S subunit. The polypeptide is Large ribosomal subunit protein uL3 (Rickettsia rickettsii (strain Iowa)).